The chain runs to 869 residues: Mismatch repair endonuclease PMS2 (869 aa).

ATP-binding residues include asparagine 44, aspartate 69, glutamate 108, alanine 109, and leucine 110. The short motif at 585–588 (RRFK) is the Nuclear localization signal element.

It belongs to the DNA mismatch repair MutL/HexB family.

Its subcellular location is the nucleus. It catalyses the reaction ATP + H2O = ADP + phosphate + H(+). In terms of biological role, component of the post-replicative DNA mismatch repair system (MMR). Involved in B cell growth by positively regulating B cell proliferation and controlling replication efficiency. Controls cell cycle to prevent re-replication and defects in DNA damage-induced G2 checkpoint. Doesn't seem to counteract or control the immunoglobulin gene conversion (Ig GC) and to contribute to guanine/uracil mismatch repair. Possesses an ATPase activity, but in the absence of gross structural changes, ATP hydrolysis may not be necessary for proficient mismatch repair. This is Mismatch repair endonuclease PMS2 from Gallus gallus (Chicken).